The primary structure comprises 371 residues: Probable cysteine protease RDL5 (371 aa).

Residues 1–23 (MGYAKSAMLIFLLALVIASCATA) form the signal peptide. Residues 24–143 (MDMSVVSSND…NRYKTSDGDV (120 aa)) constitute a propeptide, activation peptide. Asn-94 carries an N-linked (GlcNAc...) asparagine glycan. 3 disulfide bridges follow: Cys-165–Cys-206, Cys-199–Cys-239, and Cys-298–Cys-349. Cys-168 is a catalytic residue. Active-site residues include His-304 and Asn-324.

This sequence belongs to the peptidase C1 family. As to expression, expressed in roots, inflorescences and siliques.

Possesses protease activity in vitro. This chain is Probable cysteine protease RDL5, found in Arabidopsis thaliana (Mouse-ear cress).